The primary structure comprises 249 residues: MKPVPTYVQDKDESTLMFSVCSLVRDQAKYDRLLESFERFGFTPDKAEFLAADNREGNQFHGFSWHKQMLPRCKGRYVIFCHEDVELVDRGYDDLVAAIEALEEADPKWLVAGVAGSPWRPLNHSVTAQALHISDVFGNDRRRGNVPCRVESLDECFLLMRRLKPVLNSYDMQGFHYYGADLCLQAEFLGGRAYAIDFHLHHYGRAIADENFHRLRQEMAQKYRRWFPGRILHCVTGRVALGGGWYEAR.

This chain is ATP synthase subunits region ORF 6, found in Fuscovulum blasticum (Rhodobacter blasticus).